We begin with the raw amino-acid sequence, 336 residues long: Solute-binding protein Csal_2479 (336 aa).

A signal peptide spans 1-33 (MQTNKRLKMASCVKAAAMLGMLLSVSISTTAQA). Beta-D-glucuronate-binding positions include His-42, Gln-80, Arg-156, Arg-177, Tyr-200, 217-218 (NN), and Glu-244.

The protein belongs to the bacterial solute-binding protein 7 family. The complex is comprised of an extracytoplasmic solute-binding protein and a heteromeric permease formed by two transmembrane proteins.

Its subcellular location is the periplasm. Its function is as follows. Solute-binding protein that binds D-glucuronate (in vitro). Probably part of a tripartite ATP-independent periplasmic (TRAP) transport system that mediates solute transport into the cytoplasm. This Chromohalobacter salexigens (strain ATCC BAA-138 / DSM 3043 / CIP 106854 / NCIMB 13768 / 1H11) protein is Solute-binding protein Csal_2479.